Reading from the N-terminus, the 660-residue chain is Histone deacetylase 5 (660 aa).

Alanine 2 is subject to N-acetylalanine. The histone deacetylase stretch occupies residues 26-349 (KVGLIYDETM…SLACVQVLLE (324 aa)). Histidine 158 (proton donor/acceptor) is an active-site residue. The Zn(2+) site is built by aspartate 198, histidine 200, and aspartate 291.

This sequence belongs to the histone deacetylase family. HD type 2 subfamily. In terms of assembly, interacts with HDA6. Zn(2+) is required as a cofactor. Expressed in stems, leaves, flowers, siliques and mature seeds.

It is found in the nucleus. The protein localises to the cytoplasm. It carries out the reaction N(6)-acetyl-L-lysyl-[histone] + H2O = L-lysyl-[histone] + acetate. Its activity is regulated as follows. Inhibited by trichostatin A (TSA), a well-known histone deacetylase inhibitor. Its function is as follows. Responsible for the deacetylation of lysine residues on the N-terminal part of the core histones (H2A, H2B, H3 and H4). Histone deacetylation gives a tag for epigenetic repression and plays an important role in transcriptional regulation, cell cycle progression and developmental events. Histone deacetylases act via the formation of large multiprotein complexes. Involved in the regulation of flowering time by repressing FLC and AGL27/MAF1 expression. Forms a histone deacetylase complex with HDA6, FLD and MSI4/FVE that represses FLC gene expression to control flowering time. Unlike its tandem duplication HDA18, HDA5 does not seem to be required for the cellular patterning in the root epidermis. In Arabidopsis thaliana (Mouse-ear cress), this protein is Histone deacetylase 5.